An 896-amino-acid chain; its full sequence is Myelin regulatory factor-like protein (896 aa).

Positions 111-403 form a DNA-binding region, NDT80; sequence GLPHRTFHNC…SNPGQFENDI (293 aa). Residues 449–557 form the Peptidase S74 domain; it reads SDSRAKQNVQ…KLTNNLEERI (109 aa). Residues 541–573 adopt a coiled-coil conformation; sequence GAVKQLCKLTNNLEERIEELEIWNRKLARLKRL. A helical membrane pass occupies residues 622-638; that stretch reads VFQSLVITLIAVMAFCL. Over residues 648-658 the composition is skewed to polar residues; it reads APSSNLTSSQE. The segment at 648-672 is disordered; that stretch reads APSSNLTSSQEPALPSTASPSAPNT. The segment covering 659-672 has biased composition (low complexity); it reads PALPSTASPSAPNT.

It belongs to the MRF family.

It localises to the membrane. This chain is Myelin regulatory factor-like protein (MYRFL), found in Bos taurus (Bovine).